The primary structure comprises 154 residues: Putative lipoprotein MAB_4074c (154 aa).

A signal peptide spans 1-21 (MMNRVIVGAMGLLAAGAVVVG). A lipid anchor (N-palmitoyl cysteine) is attached at Cys22. Cys22 is lipidated: S-diacylglycerol cysteine.

The protein belongs to the mycobacterial 19 kDa antigen family.

The protein localises to the cell membrane. The chain is Putative lipoprotein MAB_4074c from Mycobacteroides abscessus (strain ATCC 19977 / DSM 44196 / CCUG 20993 / CIP 104536 / JCM 13569 / NCTC 13031 / TMC 1543 / L948) (Mycobacterium abscessus).